The sequence spans 263 residues: Type III pantothenate kinase (263 aa).

6-13 (DVGNTRIK) provides a ligand contact to ATP. Substrate-binding positions include tyrosine 92 and 99 to 102 (GTDR). The active-site Proton acceptor is the aspartate 101. An ATP-binding site is contributed by threonine 124. Residue threonine 174 coordinates substrate.

The protein belongs to the type III pantothenate kinase family. In terms of assembly, homodimer. NH4(+) serves as cofactor. K(+) is required as a cofactor.

Its subcellular location is the cytoplasm. It catalyses the reaction (R)-pantothenate + ATP = (R)-4'-phosphopantothenate + ADP + H(+). It participates in cofactor biosynthesis; coenzyme A biosynthesis; CoA from (R)-pantothenate: step 1/5. Its function is as follows. Catalyzes the phosphorylation of pantothenate (Pan), the first step in CoA biosynthesis. The protein is Type III pantothenate kinase of Azoarcus sp. (strain BH72).